Consider the following 319-residue polypeptide: Protein-methionine-sulfoxide reductase catalytic subunit MsrP (319 aa).

Residues 1–54 constitute a signal peptide (tat-type signal); the sequence is MSSFKPSRFSTARLTGDAVTPKSIYLRRREFMIGLGAIAATGAASSAFADPLEA. Mo-molybdopterin is bound by residues Asn75, 78-79, Cys133, Asn218, Arg223, and 234-236; these read YE and GIK.

Belongs to the MsrP family. In terms of assembly, heterodimer of a catalytic subunit (MsrP) and a heme-binding subunit (MsrQ). Mo-molybdopterin serves as cofactor. Post-translationally, predicted to be exported by the Tat system. The position of the signal peptide cleavage has not been experimentally proven.

It is found in the periplasm. It carries out the reaction L-methionyl-[protein] + a quinone + H2O = L-methionyl-(S)-S-oxide-[protein] + a quinol. It catalyses the reaction L-methionyl-[protein] + a quinone + H2O = L-methionyl-(R)-S-oxide-[protein] + a quinol. Part of the MsrPQ system that repairs oxidized periplasmic proteins containing methionine sulfoxide residues (Met-O), using respiratory chain electrons. Thus protects these proteins from oxidative-stress damage caused by reactive species of oxygen and chlorine generated by the host defense mechanisms. MsrPQ is essential for the maintenance of envelope integrity under bleach stress, rescuing a wide series of structurally unrelated periplasmic proteins from methionine oxidation. The catalytic subunit MsrP is non-stereospecific, being able to reduce both (R-) and (S-) diastereoisomers of methionine sulfoxide. The chain is Protein-methionine-sulfoxide reductase catalytic subunit MsrP from Brucella melitensis biotype 1 (strain ATCC 23456 / CCUG 17765 / NCTC 10094 / 16M).